Reading from the N-terminus, the 984-residue chain is Ephrin type-B receptor 1 (984 aa).

The signal sequence occupies residues 1–17 (MALDCLLLFLLASAVAA). At 18–540 (MEETLMDTRT…YKSELREQLP (523 aa)) the chain is on the extracellular side. Residues 19 to 201 (EETLMDTRTA…FFKKCPSIVQ (183 aa)) enclose the Eph LBD domain. Fibronectin type-III domains follow at residues 322–432 (VPSG…TNQA) and 433–528 (APST…TLTD). N-linked (GlcNAc...) asparagine glycans are attached at residues Asn334, Asn426, and Asn480. A helical membrane pass occupies residues 541–563 (LIAGSAAAGVVFVVSLVAISIVC). The Cytoplasmic segment spans residues 564–984 (SRKRAYSKEA…QMNQSPSVMA (421 aa)). Tyr600 carries the phosphotyrosine modification. A Protein kinase domain is found at 619 to 882 (VKIEEVIGAG…EIVNTLDKMI (264 aa)). Residues 625-633 (IGAGEFGEV) and Lys651 contribute to the ATP site. Asp744 functions as the Proton acceptor in the catalytic mechanism. The 65-residue stretch at 911–975 (TAFTTVDDWL…LSSIHSMRVQ (65 aa)) folds into the SAM domain. Tyr928 carries the phosphotyrosine; by autocatalysis modification. The PDZ-binding signature appears at 982 to 984 (VMA).

The protein belongs to the protein kinase superfamily. Tyr protein kinase family. Ephrin receptor subfamily. Heterotetramer upon binding of the ligand. The heterotetramer is composed of an ephrin dimer and a receptor dimer. Oligomerization is probably required to induce biological responses. Interacts with EPHB6; transphosphorylates EPHB6 to form an active signaling complex. Interacts with PICK1. Interacts (through Tyr-594) with NCK1 (via SH2 domain); activates the JUN cascade to regulate cell adhesion. The ligand-activated form interacts (through Tyr-928) with GRB7 and GRB10 (via SH2 domains). The ligand-activated form interacts (residues within the catalytic domain) with GRB2 (via SH2 domain). Interacts with GRB2, SHC1 and SRC; activates the MAPK/ERK cascade to regulate cell migration. Interacts with CBL; regulates receptor degradation through ubiquitination. Interacts with ACP1. Phosphorylated. Autophosphorylation is stimulated by the ligand EFNB1. Required for interaction with SH2 domain-containing interactors, for activation of the MAPK/ERK and JUN signaling cascades and for ubiquitination by CBL. Post-translationally, ubiquitinated; (EFNB1)ligand-induced poly- and/or multi-ubiquitination by CBL is regulated by SRC and leads to lysosomal degradation. As to expression, restricted to brain and testes.

It localises to the cell membrane. It is found in the early endosome membrane. The protein resides in the cell projection. Its subcellular location is the dendrite. The catalysed reaction is L-tyrosyl-[protein] + ATP = O-phospho-L-tyrosyl-[protein] + ADP + H(+). Receptor tyrosine kinase which binds promiscuously transmembrane ephrin-B family ligands residing on adjacent cells, leading to contact-dependent bidirectional signaling into neighboring cells. The signaling pathway downstream of the receptor is referred to as forward signaling while the signaling pathway downstream of the ephrin ligand is referred to as reverse signaling. Cognate/functional ephrin ligands for this receptor include EFNB1, EFNB2 and EFNB3. During nervous system development, regulates retinal axon guidance redirecting ipsilaterally ventrotemporal retinal ganglion cells axons at the optic chiasm midline. This probably requires repulsive interaction with EFNB2. In the adult nervous system together with EFNB3, regulates chemotaxis, proliferation and polarity of the hippocampus neural progenitors. In addition to its role in axon guidance also plays an important redundant role with other ephrin-B receptors in development and maturation of dendritic spines and synapse formation. May also regulate angiogenesis. More generally, may play a role in targeted cell migration and adhesion. Upon activation by EFNB1 and probably other ephrin-B ligands activates the MAPK/ERK and the JNK signaling cascades to regulate cell migration and adhesion respectively. Involved in the maintenance of the pool of satellite cells (muscle stem cells) by promoting their self-renewal and reducing their activation and differentiation. The protein is Ephrin type-B receptor 1 (Ephb1) of Rattus norvegicus (Rat).